A 493-amino-acid polypeptide reads, in one-letter code: Aspartyl/glutamyl-tRNA(Asn/Gln) amidotransferase subunit B (493 aa).

The disordered stretch occupies residues 473-493 (KSGGKANPKQAADLVNKRLTE).

It belongs to the GatB/GatE family. GatB subfamily. In terms of assembly, heterotrimer of A, B and C subunits.

The enzyme catalyses L-glutamyl-tRNA(Gln) + L-glutamine + ATP + H2O = L-glutaminyl-tRNA(Gln) + L-glutamate + ADP + phosphate + H(+). It carries out the reaction L-aspartyl-tRNA(Asn) + L-glutamine + ATP + H2O = L-asparaginyl-tRNA(Asn) + L-glutamate + ADP + phosphate + 2 H(+). In terms of biological role, allows the formation of correctly charged Asn-tRNA(Asn) or Gln-tRNA(Gln) through the transamidation of misacylated Asp-tRNA(Asn) or Glu-tRNA(Gln) in organisms which lack either or both of asparaginyl-tRNA or glutaminyl-tRNA synthetases. The reaction takes place in the presence of glutamine and ATP through an activated phospho-Asp-tRNA(Asn) or phospho-Glu-tRNA(Gln). The protein is Aspartyl/glutamyl-tRNA(Asn/Gln) amidotransferase subunit B of Treponema denticola (strain ATCC 35405 / DSM 14222 / CIP 103919 / JCM 8153 / KCTC 15104).